A 532-amino-acid chain; its full sequence is RNA-directed RNA polymerase beta chain (532 aa).

Residues 245-375 (ELARLGSIDG…PNEEKTFTTG (131 aa)) enclose the RdRp catalytic domain.

As to quaternary structure, part of the viral RNA-dependent RNA polymerase complex, the other subunits are probably the host ribosomal protein S1, EF-Tu and EF-Ts.

It catalyses the reaction RNA(n) + a ribonucleoside 5'-triphosphate = RNA(n+1) + diphosphate. Functionally, this is the catalytic subunit of the viral RNA-dependent RNA polymerase complex. This complex is involved in viral RNA replication that produces (+)-stranded genomes via a complementary, (-)-stranded intermediate. The protein is RNA-directed RNA polymerase beta chain of Escherichia coli (Bacteriophage GA).